An 858-amino-acid chain; its full sequence is Leucine--tRNA ligase (858 aa).

The 'HIGH' region signature appears at Pro-43–His-54. The 'KMSKS' region signature appears at Lys-629 to Ser-633. ATP is bound at residue Lys-632.

Belongs to the class-I aminoacyl-tRNA synthetase family.

Its subcellular location is the cytoplasm. The enzyme catalyses tRNA(Leu) + L-leucine + ATP = L-leucyl-tRNA(Leu) + AMP + diphosphate. The chain is Leucine--tRNA ligase from Treponema denticola (strain ATCC 35405 / DSM 14222 / CIP 103919 / JCM 8153 / KCTC 15104).